Reading from the N-terminus, the 241-residue chain is SURF1-like protein (241 aa).

A run of 2 helical transmembrane segments spans residues 5 to 25 (LTVL…LNRL) and 199 to 219 (LEYA…YRIY).

The protein belongs to the SURF1 family.

The protein resides in the cell membrane. The protein is SURF1-like protein of Rickettsia bellii (strain RML369-C).